Consider the following 112-residue polypeptide: uncharacterized protein (112 aa).

This is an uncharacterized protein from Dictyostelium discoideum (Social amoeba).